The chain runs to 171 residues: Mitochondrial import inner membrane translocase subunit Tim17-A (171 aa).

Cys9 and Cys78 are disulfide-bonded. 3 helical membrane passes run 17 to 37 (CGGA…IKGF), 63 to 77 (GGSF…SMID), and 113 to 133 (VGSA…GILL). The disordered stretch occupies residues 144 to 171 (GPQFAEDPSQLPSTQLPSSPFGDYRQYQ). Positions 151-163 (PSQLPSTQLPSSP) are enriched in low complexity.

It belongs to the Tim17/Tim22/Tim23 family. In terms of assembly, component of the TIM23 complex at least composed of TIMM23, TIMM17 (TIMM17A or TIMM17B) and TIMM50. The complex interacts with the TIMM44 component of the PAM complex and with DNAJC15. Degraded by YMEL1 downstream of the integrated stress response (ISR).

The protein localises to the mitochondrion inner membrane. Functionally, essential component of the TIM23 complex, a complex that mediates the translocation of transit peptide-containing proteins across the mitochondrial inner membrane. The protein is Mitochondrial import inner membrane translocase subunit Tim17-A (TIMM17A) of Homo sapiens (Human).